A 272-amino-acid polypeptide reads, in one-letter code: HMP-PP phosphatase (272 aa).

The Nucleophile role is filled by Asp8. Asp8, Asp10, and Asp212 together coordinate Mg(2+).

It belongs to the HAD-like hydrolase superfamily. Cof family. Mg(2+) serves as cofactor.

The catalysed reaction is 4-amino-2-methyl-5-(diphosphooxymethyl)pyrimidine + H2O = 4-amino-2-methyl-5-(phosphooxymethyl)pyrimidine + phosphate + H(+). Its function is as follows. Catalyzes the hydrolysis of 4-amino-2-methyl-5-hydroxymethylpyrimidine pyrophosphate (HMP-PP) to 4-amino-2-methyl-5-hydroxymethylpyrimidine phosphate (HMP-P). The sequence is that of HMP-PP phosphatase from Salmonella arizonae (strain ATCC BAA-731 / CDC346-86 / RSK2980).